Consider the following 238-residue polypeptide: Ubiquinone biosynthesis O-methyltransferase (238 aa).

S-adenosyl-L-methionine-binding residues include Arg40, Gly59, Asp81, and Met126.

Belongs to the methyltransferase superfamily. UbiG/COQ3 family.

The catalysed reaction is a 3-demethylubiquinol + S-adenosyl-L-methionine = a ubiquinol + S-adenosyl-L-homocysteine + H(+). It carries out the reaction a 3-(all-trans-polyprenyl)benzene-1,2-diol + S-adenosyl-L-methionine = a 2-methoxy-6-(all-trans-polyprenyl)phenol + S-adenosyl-L-homocysteine + H(+). Its pathway is cofactor biosynthesis; ubiquinone biosynthesis. O-methyltransferase that catalyzes the 2 O-methylation steps in the ubiquinone biosynthetic pathway. In Neisseria meningitidis serogroup A / serotype 4A (strain DSM 15465 / Z2491), this protein is Ubiquinone biosynthesis O-methyltransferase.